A 159-amino-acid chain; its full sequence is 2-C-methyl-D-erythritol 2,4-cyclodiphosphate synthase (159 aa).

The a divalent metal cation site is built by aspartate 10 and histidine 12. 4-CDP-2-C-methyl-D-erythritol 2-phosphate is bound by residues 10–12 (DVH) and 36–37 (HS). Histidine 44 is a binding site for a divalent metal cation. 4-CDP-2-C-methyl-D-erythritol 2-phosphate-binding positions include 58-60 (DIG), 134-137 (TTSE), phenylalanine 141, and arginine 144.

It belongs to the IspF family. Homotrimer. A divalent metal cation is required as a cofactor.

The enzyme catalyses 4-CDP-2-C-methyl-D-erythritol 2-phosphate = 2-C-methyl-D-erythritol 2,4-cyclic diphosphate + CMP. It functions in the pathway isoprenoid biosynthesis; isopentenyl diphosphate biosynthesis via DXP pathway; isopentenyl diphosphate from 1-deoxy-D-xylulose 5-phosphate: step 4/6. Its function is as follows. Involved in the biosynthesis of isopentenyl diphosphate (IPP) and dimethylallyl diphosphate (DMAPP), two major building blocks of isoprenoid compounds. Catalyzes the conversion of 4-diphosphocytidyl-2-C-methyl-D-erythritol 2-phosphate (CDP-ME2P) to 2-C-methyl-D-erythritol 2,4-cyclodiphosphate (ME-CPP) with a corresponding release of cytidine 5-monophosphate (CMP). The chain is 2-C-methyl-D-erythritol 2,4-cyclodiphosphate synthase from Roseobacter denitrificans (strain ATCC 33942 / OCh 114) (Erythrobacter sp. (strain OCh 114)).